The following is a 221-amino-acid chain: Ribosomal RNA small subunit methyltransferase Nep1 (221 aa).

S-adenosyl-L-methionine contacts are provided by residues G174, G179, and 196 to 201 (VGDEPL).

The protein belongs to the class IV-like SAM-binding methyltransferase superfamily. RNA methyltransferase NEP1 family. Homodimer.

It carries out the reaction a pseudouridine in rRNA + S-adenosyl-L-methionine = an N(1)-methylpseudouridine in rRNA + S-adenosyl-L-homocysteine + H(+). Functionally, methyltransferase involved in ribosomal biogenesis. Specifically catalyzes the N1-methylation of the pseudouridine corresponding to position 914 in M.jannaschii 16S rRNA. This Pyrobaculum neutrophilum (strain DSM 2338 / JCM 9278 / NBRC 100436 / V24Sta) (Thermoproteus neutrophilus) protein is Ribosomal RNA small subunit methyltransferase Nep1.